A 181-amino-acid polypeptide reads, in one-letter code: Adenine phosphoribosyltransferase (181 aa).

Belongs to the purine/pyrimidine phosphoribosyltransferase family. As to quaternary structure, homodimer.

It is found in the cytoplasm. It carries out the reaction AMP + diphosphate = 5-phospho-alpha-D-ribose 1-diphosphate + adenine. It functions in the pathway purine metabolism; AMP biosynthesis via salvage pathway; AMP from adenine: step 1/1. In terms of biological role, catalyzes a salvage reaction resulting in the formation of AMP, that is energically less costly than de novo synthesis. The sequence is that of Adenine phosphoribosyltransferase from Neorhizobium galegae (Rhizobium galegae).